The chain runs to 225 residues: Deoxyribose-phosphate aldolase (225 aa).

Residue Asp-96 is the Proton donor/acceptor of the active site. Lys-157 functions as the Schiff-base intermediate with acetaldehyde in the catalytic mechanism. The Proton donor/acceptor role is filled by Lys-185.

This sequence belongs to the DeoC/FbaB aldolase family. DeoC type 1 subfamily.

The protein resides in the cytoplasm. It catalyses the reaction 2-deoxy-D-ribose 5-phosphate = D-glyceraldehyde 3-phosphate + acetaldehyde. Its pathway is carbohydrate degradation; 2-deoxy-D-ribose 1-phosphate degradation; D-glyceraldehyde 3-phosphate and acetaldehyde from 2-deoxy-alpha-D-ribose 1-phosphate: step 2/2. Functionally, catalyzes a reversible aldol reaction between acetaldehyde and D-glyceraldehyde 3-phosphate to generate 2-deoxy-D-ribose 5-phosphate. This Microcystis aeruginosa (strain NIES-843 / IAM M-2473) protein is Deoxyribose-phosphate aldolase.